The following is a 205-amino-acid chain: MSRKLHEEELTPEGMDAAQNADPAGDPVSENEGALPAAEPQAQILQEEVERLRAERDAALADREAFQDRLARLQAEFDNARKREAKERSEFRDYSVASTAEAFLPVLDNFQLALASTGTAEQLRMGVELIVKQMDEALRSLSIIPIETVGAQFDPRVHEALEMVEREDVPDHQVIEEVRRGYRIRERLMRPALVRIASNSKQTQA.

Residues 1-40 are disordered; that stretch reads MSRKLHEEELTPEGMDAAQNADPAGDPVSENEGALPAAEP.

It belongs to the GrpE family. Homodimer.

Its subcellular location is the cytoplasm. Its function is as follows. Participates actively in the response to hyperosmotic and heat shock by preventing the aggregation of stress-denatured proteins, in association with DnaK and GrpE. It is the nucleotide exchange factor for DnaK and may function as a thermosensor. Unfolded proteins bind initially to DnaJ; upon interaction with the DnaJ-bound protein, DnaK hydrolyzes its bound ATP, resulting in the formation of a stable complex. GrpE releases ADP from DnaK; ATP binding to DnaK triggers the release of the substrate protein, thus completing the reaction cycle. Several rounds of ATP-dependent interactions between DnaJ, DnaK and GrpE are required for fully efficient folding. In Acidobacterium capsulatum (strain ATCC 51196 / DSM 11244 / BCRC 80197 / JCM 7670 / NBRC 15755 / NCIMB 13165 / 161), this protein is Protein GrpE.